The chain runs to 169 residues: Sulfopyruvate decarboxylase subunit alpha (169 aa).

This sequence belongs to the ComD family. In terms of assembly, heterododecamer composed of 6 subunits alpha and 6 subunits beta.

It catalyses the reaction 3-sulfopyruvate + H(+) = sulfoacetaldehyde + CO2. It participates in cofactor biosynthesis; coenzyme M biosynthesis; sulfoacetaldehyde from phosphoenolpyruvate and sulfite: step 4/4. With respect to regulation, inhibited by oxygen when heated in air at 80 degrees Celsius. The enzyme is reactivated by addition of dithionite. Involved in the biosynthesis of the coenzyme M (2-mercaptoethanesulfonic acid). Catalyzes the decarboxylation of sulfopyruvate to sulfoacetaldehyde. This Methanocaldococcus jannaschii (strain ATCC 43067 / DSM 2661 / JAL-1 / JCM 10045 / NBRC 100440) (Methanococcus jannaschii) protein is Sulfopyruvate decarboxylase subunit alpha.